The following is a 368-amino-acid chain: Carbamoyl phosphate synthase small chain (368 aa).

Residues Met1–Gly178 form a CPSase region. Positions 45, 230, and 232 each coordinate L-glutamine. The Glutamine amidotransferase type-1 domain occupies His182–Leu368. The Nucleophile role is filled by Cys257. Residues Phe258, Gln261, Asn299, Gly301, and Tyr302 each contribute to the L-glutamine site. Catalysis depends on residues His342 and Glu344.

This sequence belongs to the CarA family. Composed of two chains; the small (or glutamine) chain promotes the hydrolysis of glutamine to ammonia, which is used by the large (or ammonia) chain to synthesize carbamoyl phosphate. Tetramer of heterodimers (alpha,beta)4.

It catalyses the reaction hydrogencarbonate + L-glutamine + 2 ATP + H2O = carbamoyl phosphate + L-glutamate + 2 ADP + phosphate + 2 H(+). It carries out the reaction L-glutamine + H2O = L-glutamate + NH4(+). It functions in the pathway amino-acid biosynthesis; L-arginine biosynthesis; carbamoyl phosphate from bicarbonate: step 1/1. It participates in pyrimidine metabolism; UMP biosynthesis via de novo pathway; (S)-dihydroorotate from bicarbonate: step 1/3. Small subunit of the glutamine-dependent carbamoyl phosphate synthetase (CPSase). CPSase catalyzes the formation of carbamoyl phosphate from the ammonia moiety of glutamine, carbonate, and phosphate donated by ATP, constituting the first step of 2 biosynthetic pathways, one leading to arginine and/or urea and the other to pyrimidine nucleotides. The small subunit (glutamine amidotransferase) binds and cleaves glutamine to supply the large subunit with the substrate ammonia. In Methanosarcina acetivorans (strain ATCC 35395 / DSM 2834 / JCM 12185 / C2A), this protein is Carbamoyl phosphate synthase small chain.